We begin with the raw amino-acid sequence, 512 residues long: Transmembrane protein 102 (512 aa).

The Extracellular segment spans residues 1 to 267 (MASAVWGNAP…EAWPTLCPAQ (267 aa)). A disordered region spans residues 168-258 (PVPGGRDWIH…PGPQPSEARE (91 aa)). Basic and acidic residues-rich tracts occupy residues 174–186 (DWIH…EGPR) and 195–209 (PHSD…ESLE). The span at 210–226 (KSPSNVSVPESPQQNLT) shows a compositional bias: polar residues. Residues 268 to 284 (VAAWFFASLAAVAESLF) traverse the membrane as a helical segment. Residues 285-512 (PVPGAPRLVH…GLAGVGAGSH (228 aa)) are Cytoplasmic-facing.

As to quaternary structure, interacts with CSF2RB; this interaction occurs preferentially in the absence of CSF2.

The protein localises to the cell membrane. Selectively involved in CSF2 deprivation-induced apoptosis via a mitochondria-dependent pathway. The protein is Transmembrane protein 102 (TMEM102) of Bos taurus (Bovine).